The following is a 746-amino-acid chain: MNGEGISDGLSAERKVEIRVRKNGRKDKVIVEKSAAQGLPEGWIKKLEITNRSGRKTRRDPFFIDPKSEYIFQSFKDASRYVETGNIGHYARKLKESDIEDDDSGNGKTVLRLEYVDKRSADDVLEKEKTIDDVRRSKRRNLSSSDEHSKNCKMTSDLSIVTSQVLEDLGKKEEVKDPIEKQLIAKRVTRSQTKASTTEEVVVDLKRNLSSSNAKSEKDSVNSSVRSQKPKKEAVMKEEEEQDSSEKRITRSKVEEKKNELSNSVARRTSKRLAGIELEPTPELKTRAKVQRIVPLDDEPTPELKTRTKVQRVVPPDDEPTPELKTRTKIQRIVPPDDEPTLELKTRTKVQRILPPDDELTPELKSRTKVQRIVPPDDELTPEFKTRTKVQQRIPPDDGRAGKCKQPVNHVTTSGSKKTEIPLNKEVAQSCNEQSSQKPHAAAATSNNRVSADSAVGIQNIGKAVGRKPSKDKKTLKSPLIVYELNPVFHLDGYKQKEEMSPVSPLSCQTSATKCEKTAAGKRVGRSSPKANLTTSVKPTQISPLRSPNKGKQPHPSDSGSAIQRRNKLANEYSNSSVVRGTCSEVMEKSTNSFSSAFDSTLADLCKDPCIAFAIKTLTGESLCLLNTPAISSNPINNHTKQKGVSFTPETPGNVNTCSEKLVFPSPPPGANIWQDPCIDFAIKTLTGAIPIGLDEPDTKSKSQGMTSTTAATQEAKGRQNNCDYMTNKTVGKPDDLRFTQSFSKD.

2 consecutive short sequence motifs (nuclear localization signal) follow at residues 13 to 20 (ERKVEIRV) and 44 to 51 (IKKLEITN). Positions 29-104 (VIVEKSAAQG…KESDIEDDDS (76 aa)) constitute an MBD domain. Disordered stretches follow at residues 131–157 (IDDV…MTSD), 169–283 (LGKK…PTPE), 295–328 (PLDD…KTRT), 348–479 (TKVQ…LKSP), 518–562 (TAAG…SGSA), and 696–746 (EPDT…FSKD). Residues 169–180 (LGKKEEVKDPIE) are compositionally biased toward basic and acidic residues. The segment covering 190–199 (RSQTKASTTE) has biased composition (polar residues). Residues 244 to 260 (SSEKRITRSKVEEKKNE) are compositionally biased toward basic and acidic residues. Positions 256 to 263 (EKKNELSN) match the Nuclear localization signal motif. Residues 427 to 451 (VAQSCNEQSSQKPHAAAATSNNRVS) show a composition bias toward polar residues. The segment covering 465–476 (VGRKPSKDKKTL) has biased composition (basic residues). 2 stretches are compositionally biased toward polar residues: residues 529 to 546 (PKAN…SPLR) and 702 to 730 (KSQG…TNKT). Residues 732–746 (GKPDDLRFTQSFSKD) show a composition bias toward basic and acidic residues.

It localises to the nucleus. Probable transcriptional regulator. The sequence is that of Methyl-CpG-binding domain-containing protein 13 (MBD13) from Arabidopsis thaliana (Mouse-ear cress).